The following is a 354-amino-acid chain: DNA integrity scanning protein DisA (354 aa).

A DAC domain is found at 6-144; it reads DDELKKILKI…GDIKYVLRDS (139 aa). ATP-binding positions include Gly-73, Leu-91, and 104-108; that span reads TRHRT.

Belongs to the DisA family. Homooctamer. Mg(2+) is required as a cofactor.

It catalyses the reaction 2 ATP = 3',3'-c-di-AMP + 2 diphosphate. Participates in a DNA-damage check-point that is active prior to asymmetric division when DNA is damaged. DisA forms globular foci that rapidly scan along the chromosomes during sporulation, searching for lesions. When a lesion is present, DisA pauses at the lesion site. This triggers a cellular response that culminates in a temporary block in sporulation initiation. Its function is as follows. Also has diadenylate cyclase activity, catalyzing the condensation of 2 ATP molecules into cyclic di-AMP (c-di-AMP). c-di-AMP acts as a signaling molecule that couples DNA integrity with progression of sporulation. The rise in c-di-AMP level generated by DisA while scanning the chromosome, operates as a positive signal that advances sporulation; upon encountering a lesion, the DisA focus arrests at the damaged site and halts c-di-AMP synthesis. This is DNA integrity scanning protein DisA from Clostridium perfringens (strain 13 / Type A).